The sequence spans 119 residues: Probable non-functional T cell receptor gamma variable 11 (119 aa).

Positions 1 to 18 (MPLVVAVIFFSLWVFALG) are cleaved as a signal peptide. In terms of domain architecture, Ig-like spans 23–119 (PEISISRPAN…VYHCACWIRH (97 aa)). Residue Asn32 is glycosylated (N-linked (GlcNAc...) asparagine).

Most probably, the gamma-delta TR is not assembled due to incorrect folding of the gamma chain. Gamma-delta TR is a heterodimer composed of a gamma and delta chain; disulfide-linked. The gamma-delta TR is associated with the transmembrane signaling CD3 coreceptor proteins following the stoichiometry: a single gamma-delta TR heterodimer associates with one CD3D-CD3E heterodimer, one CD3G-CD3E heterodimer and one CD247 homodimer forming a stable octameric structure. Upon activation, gamma-delta TR complex associates with FCER1G to initiate intracellular signaling.

Its subcellular location is the cell membrane. Its function is as follows. Probable non-functional open reading frame (ORF) of V region of the variable domain of T cell receptor (TR) gamma chain. Non-functional ORF generally cannot participate in the synthesis of a productive T cell receptor (TR) chain due to altered V-(D)-J or switch recombination and/or splicing site (at mRNA level) and/or conserved amino acid change (protein level). Gamma-delta TRs recognize a variety of self and foreign non-peptide antigens frequently expressed at the epithelial boundaries between the host and external environment, including endogenous lipids presented by MH-like protein CD1D and phosphoantigens presented by butyrophilin-like molecule BTN3A1. Upon antigen recognition induces rapid, innate-like immune responses involved in pathogen clearance and tissue repair. Binding of gamma-delta TR complex to antigen triggers phosphorylation of immunoreceptor tyrosine-based activation motifs (ITAMs) in the CD3 chains by the LCK and FYN kinases, allowing the recruitment, phosphorylation, and activation of ZAP70 that facilitates phosphorylation of the scaffolding proteins LCP2 and LAT. This lead to the formation of a supramolecular signalosome that recruits the phospholipase PLCG1, resulting in calcium mobilization and ERK activation, ultimately leading to T cell expansion and differentiation into effector cells. Gamma-delta TRs are produced through somatic rearrangement of a limited repertoire of variable (V), diversity (D), and joining (J) genes. The potential diversity of gamma-delta TRs is conferred by the unique ability to rearrange (D) genes in tandem and to utilize all three reading frames. The combinatorial diversity is considerably increased by the sequence exonuclease trimming and random nucleotide (N) region additions which occur during the V-(D)-J rearrangements. In Homo sapiens (Human), this protein is Probable non-functional T cell receptor gamma variable 11.